Consider the following 135-residue polypeptide: Peptide methionine sulfoxide reductase MsrB (135 aa).

Residues 13–135 (DADWREQLTP…NGHSMVFEPV (123 aa)) enclose the MsrB domain. Residues cysteine 52, cysteine 55, cysteine 101, and cysteine 104 each coordinate Zn(2+). Residue cysteine 124 is the Nucleophile of the active site.

This sequence belongs to the MsrB Met sulfoxide reductase family. Zn(2+) serves as cofactor.

It carries out the reaction L-methionyl-[protein] + [thioredoxin]-disulfide + H2O = L-methionyl-(R)-S-oxide-[protein] + [thioredoxin]-dithiol. In Agrobacterium fabrum (strain C58 / ATCC 33970) (Agrobacterium tumefaciens (strain C58)), this protein is Peptide methionine sulfoxide reductase MsrB.